Here is a 1330-residue protein sequence, read N- to C-terminus: Sister chromatid cohesion protein PDS5 homolog A (1330 aa).

The stretch at 387–423 (SLVNDQLLGFVRERTLDKRWRVRKEAMMGLAQLYKKY) is one HEAT repeat. The interval 1138–1330 (VNKPLSATGR…AAQRQIDLQR (193 aa)) is disordered. Residues 1160–1171 (SNISVNSELSSS) show a composition bias toward low complexity. Residues 1216-1225 (SDQATQGNST) show a composition bias toward polar residues.

It belongs to the PDS5 family. Interacts with the cohesin complex. Binds chromatin in a cohesin-dependent manner.

Its subcellular location is the nucleus. In terms of biological role, may regulate sister chromatid cohesion during mitosis and couple it to DNA replication. In Gallus gallus (Chicken), this protein is Sister chromatid cohesion protein PDS5 homolog A.